Reading from the N-terminus, the 529-residue chain is CTP synthase (529 aa).

Positions 1–266 (MTKYIIVTGG…TKKIFNKLGL (266 aa)) are amidoligase domain. Ser13 is a binding site for CTP. Position 13 (Ser13) interacts with UTP. Residue 14-19 (SVGKGT) coordinates ATP. Tyr54 is an L-glutamine binding site. Asp71 contributes to the ATP binding site. Mg(2+)-binding residues include Asp71 and Glu141. Residues 148 to 150 (DIE), 187 to 192 (KTKPLQ), and Lys223 each bind CTP. UTP-binding positions include 187 to 192 (KTKPLQ) and Lys223. Residues 291–529 (KIALVGKYTK…FLNFLSVASA (239 aa)) form the Glutamine amidotransferase type-1 domain. Gly354 contacts L-glutamine. Cys381 (nucleophile; for glutamine hydrolysis) is an active-site residue. Residues 382 to 385 (FGMQ), Glu405, and Arg462 contribute to the L-glutamine site. Catalysis depends on residues His506 and Glu508.

Belongs to the CTP synthase family. As to quaternary structure, homotetramer.

It carries out the reaction UTP + L-glutamine + ATP + H2O = CTP + L-glutamate + ADP + phosphate + 2 H(+). The enzyme catalyses L-glutamine + H2O = L-glutamate + NH4(+). It catalyses the reaction UTP + NH4(+) + ATP = CTP + ADP + phosphate + 2 H(+). The protein operates within pyrimidine metabolism; CTP biosynthesis via de novo pathway; CTP from UDP: step 2/2. Allosterically activated by GTP, when glutamine is the substrate; GTP has no effect on the reaction when ammonia is the substrate. The allosteric effector GTP functions by stabilizing the protein conformation that binds the tetrahedral intermediate(s) formed during glutamine hydrolysis. Inhibited by the product CTP, via allosteric rather than competitive inhibition. Catalyzes the ATP-dependent amination of UTP to CTP with either L-glutamine or ammonia as the source of nitrogen. Regulates intracellular CTP levels through interactions with the four ribonucleotide triphosphates. The chain is CTP synthase from Sulfolobus acidocaldarius (strain ATCC 33909 / DSM 639 / JCM 8929 / NBRC 15157 / NCIMB 11770).